Consider the following 175-residue polypeptide: ATP-dependent protease subunit HslV (175 aa).

The active site involves T2. Na(+)-binding residues include A156, C159, and T162.

The protein belongs to the peptidase T1B family. HslV subfamily. A double ring-shaped homohexamer of HslV is capped on each side by a ring-shaped HslU homohexamer. The assembly of the HslU/HslV complex is dependent on binding of ATP.

Its subcellular location is the cytoplasm. It catalyses the reaction ATP-dependent cleavage of peptide bonds with broad specificity.. Allosterically activated by HslU binding. Functionally, protease subunit of a proteasome-like degradation complex believed to be a general protein degrading machinery. The polypeptide is ATP-dependent protease subunit HslV (Rhizobium rhizogenes (strain K84 / ATCC BAA-868) (Agrobacterium radiobacter)).